Consider the following 371-residue polypeptide: GDSL esterase/lipase At3g27950 (371 aa).

The first 23 residues, 1–23, serve as a signal peptide directing secretion; sequence MAISKITLAIIVLLLGFTEKLSA. Ser39 functions as the Nucleophile in the catalytic mechanism. 5 N-linked (GlcNAc...) asparagine glycosylation sites follow: Asn82, Asn143, Asn178, Asn194, and Asn315. Catalysis depends on residues Asp334 and His337.

The protein belongs to the 'GDSL' lipolytic enzyme family.

It localises to the secreted. The sequence is that of GDSL esterase/lipase At3g27950 from Arabidopsis thaliana (Mouse-ear cress).